A 239-amino-acid chain; its full sequence is Tetraspanin-9 (239 aa).

Topologically, residues 1 to 13 (MARGCLCCLKYMM) are cytoplasmic. A helical transmembrane segment spans residues 14–34 (FLFNLIFWLCGCGLLGVGIWL). The Extracellular portion of the chain corresponds to 35-55 (SVSQGNFATFSPSFPSLSAAN). The chain crosses the membrane as a helical span at residues 56–76 (LVIAIGTIVMVTGFLGCLGAI). Over 77–85 (KENKCLLLS) the chain is Cytoplasmic. The chain crosses the membrane as a helical span at residues 86 to 106 (FFIVLLVILLAELILLILFFV). At 107-203 (YMDKVNENAK…VKMWFDDNKH (97 aa)) the chain is on the extracellular side. Asn180 carries N-linked (GlcNAc...) asparagine glycosylation. The chain crosses the membrane as a helical span at residues 204-224 (VLGTVGMCILIMQILGMAFSM). At 225-239 (TLFQHIHRTGKKYDA) the chain is on the cytoplasmic side.

Belongs to the tetraspanin (TM4SF) family. In terms of assembly, found in a complex with GP6. Post-translationally, glycosylated. As to expression, expressed in megakaryocytes and platelets (at protein level).

The protein resides in the membrane. The sequence is that of Tetraspanin-9 (TSPAN9) from Homo sapiens (Human).